We begin with the raw amino-acid sequence, 528 residues long: GTPase Obg (528 aa).

Positions 2-159 (ASFVDRVVLH…SDIVLELKSI (158 aa)) constitute an Obg domain. In terms of domain architecture, OBG-type G spans 160 to 343 (ADIALVGFPS…LGFAMAEIVQ (184 aa)). GTP is bound by residues 166-173 (GFPSAGKS), 191-195 (FTTLI), 212-215 (DVPG), 295-298 (NKVD), and 324-326 (SAT). The Mg(2+) site is built by S173 and T193. The OCT domain maps to 363-447 (PRAVNESGFK…DDGVVFDWEP (85 aa)). Residues 471–490 (DRPTRSQKRDEQIERREAKA) are disordered.

The protein belongs to the TRAFAC class OBG-HflX-like GTPase superfamily. OBG GTPase family. Monomer. Mg(2+) serves as cofactor.

It is found in the cytoplasm. Functionally, an essential GTPase which binds GTP, GDP and possibly (p)ppGpp with moderate affinity, with high nucleotide exchange rates and a fairly low GTP hydrolysis rate. Plays a role in control of the cell cycle, stress response, ribosome biogenesis and in those bacteria that undergo differentiation, in morphogenesis control. The sequence is that of GTPase Obg from Paenarthrobacter aurescens (strain TC1).